The following is a 423-amino-acid chain: Serine--tRNA ligase (423 aa).

Positions 107–130 (PHDSVPDGKSENDNREIRQWGAPP) are disordered. The segment covering 110–124 (SVPDGKSENDNREIR) has biased composition (basic and acidic residues). Residue 231 to 233 (TGE) coordinates L-serine. ATP is bound at residue 262-264 (RSE). Glutamate 285 contacts L-serine. 349–352 (EISS) lines the ATP pocket. Serine 385 lines the L-serine pocket.

The protein belongs to the class-II aminoacyl-tRNA synthetase family. Type-1 seryl-tRNA synthetase subfamily. Homodimer. The tRNA molecule binds across the dimer.

The protein localises to the cytoplasm. The enzyme catalyses tRNA(Ser) + L-serine + ATP = L-seryl-tRNA(Ser) + AMP + diphosphate + H(+). It catalyses the reaction tRNA(Sec) + L-serine + ATP = L-seryl-tRNA(Sec) + AMP + diphosphate + H(+). It participates in aminoacyl-tRNA biosynthesis; selenocysteinyl-tRNA(Sec) biosynthesis; L-seryl-tRNA(Sec) from L-serine and tRNA(Sec): step 1/1. Functionally, catalyzes the attachment of serine to tRNA(Ser). Is also able to aminoacylate tRNA(Sec) with serine, to form the misacylated tRNA L-seryl-tRNA(Sec), which will be further converted into selenocysteinyl-tRNA(Sec). The polypeptide is Serine--tRNA ligase (Coxiella burnetii (strain Dugway 5J108-111)).